We begin with the raw amino-acid sequence, 33 residues long: Photosystem II reaction center protein Psb30 (33 aa).

A helical transmembrane segment spans residues 5–25 (IVFQLTALLFVVAAGPLVIVL).

The protein belongs to the Psb30/Ycf12 family. As to quaternary structure, PSII is composed of 1 copy each of membrane proteins PsbA, PsbB, PsbC, PsbD, PsbE, PsbF, PsbH, PsbI, PsbJ, PsbK, PsbL, PsbM, PsbT, PsbX, PsbY, PsbZ, Psb30/Ycf12, peripheral proteins of the oxygen-evolving complex and a large number of cofactors. It forms dimeric complexes.

The protein resides in the plastid. It is found in the chloroplast thylakoid membrane. Functionally, a core subunit of photosystem II (PSII), probably helps stabilize the reaction center. The protein is Photosystem II reaction center protein Psb30 of Chlorella vulgaris (Green alga).